Reading from the N-terminus, the 108-residue chain is Small ribosomal subunit protein eS25 (108 aa).

Residues 1–36 (MAPKKAQAPPPSSKPAKSGGGKQKKKKWSKGKQKEK) are disordered. The span at 22–31 (KQKKKKWSKG) shows a compositional bias: basic residues.

This sequence belongs to the eukaryotic ribosomal protein eS25 family.

The protein is Small ribosomal subunit protein eS25 (RPS25) of Solanum lycopersicum (Tomato).